The primary structure comprises 910 residues: MASSAQSGGSSGGPAVPTVQRGIIKMVLSGCAIIVRGQPRGGPPPERQINLSNIRAGNLARRAAATQPDAKDTPDEPWAFPAREFLRKKLIGKEVCFTIENKTPQGREYGMIYLGKDTNGENIAESLVAEGLATRREGMRANNPEQNRLSECEEQAKAAKKGMWSEGNGSHTIRDLKYTIENPRHFVDSHHQKPVNAIIEHVRDGSVVRALLLPDYYLVTVMLSGIKCPTFRREADGSETPEPFAAEAKFFTESRLLQRDVQIILESCHNQNILGTILHPNGNITELLLKEGFARCVDWSIAVYTRGAEKLRAAERFAKERRLRIWRDYVAPTANLDQKDKQFVAKVMQVLNADAIVVKLNSGDYKTIHLSSIRPPRLEGENTQDKNKKLRPLYDIPYMFEAREFLRKKLIGKKVNVTVDYIRPASPATETVPAFSERTCATVTIGGINIAEALVSKGLATVIRYRQDDDQRSSHYDELLAAEARAIKNGKGLHSKKEVPIHRVADISGDTQKAKQFLPFLQRAGRSEAVVEYVFSGSRLKLYLPKETCLITFLLAGIECPRGARNLPGLVQEGEPFSEEATLFTKELVLQREVEVEVESMDKAGNFIGWLHIDGANLSVLLVEHALSKVHFTAERSSYYKSLLSAEEAAKQKKEKVWAHYEEQPVEEVMPVLEEKERSASYKPVFVTEITDDLHFYVQDVETGTQLEKLMENMRNDIASHPPVEGSYAPRRGEFCIAKFVDGEWYRARVEKVESPAKIHVFYIDYGNREVLPSTRLGTLSPAFSTRVLPAQATEYAFAFIQVPQDDDARTDAVDSVVRDIQNTQCLLNVEHLSAGCPHVTLQFADSKGDVGLGLVKEGLVMVEVRKEKQFQKVITEYLNAQESAKSARLNLWRYGDFRADDADEFGYSR.

The residue at position 2 (Ala2) is an N-acetylalanine. 3 consecutive TNase-like domains span residues 18 to 166, 193 to 328, and 341 to 496; these read TVQR…MWSE, KPVN…IWRD, and KQFV…LHSK. The residue at position 103 (Thr103) is a Phosphothreonine. At Lys193 the chain carries N6-acetyllysine. A Phosphothreonine modification is found at Thr240. 2 short sequence motifs (nuclear localization signal) span residues 321–325 and 388–392; these read RRLRI and KKLRP. Position 426 is a phosphoserine (Ser426). Lys513 participates in a covalent cross-link: Glycyl lysine isopeptide (Lys-Gly) (interchain with G-Cter in SUMO2). In terms of domain architecture, TNase-like 4 spans 525 to 660; it reads GRSEAVVEYV…KQKKEKVWAH (136 aa). Residue Lys641 is modified to N6-acetyllysine. Residue Ser645 is modified to Phosphoserine. One can recognise a Tudor domain in the interval 729-787; sequence APRRGEFCIAKFVDGEWYRARVEKVESPAKIHVFYIDYGNREVLPSTRLGTLSPAFSTR. The residue at position 779 (Thr779) is a Phosphothreonine. Ser781, Ser785, and Ser909 each carry phosphoserine.

In terms of assembly, forms a ternary complex with STAT6 and POLR2A. Associates with the RNA-induced silencing complex (RISC). Interacts with the RISC components AGO2, FMR1 and TNRC6A. Interacts with GTF2E1 and GTF2E2. Interacts with PIM1. Interacts with STAT5. Interacts with SYT11 (via C2 2 domain); the interaction with SYT11 is direct. (Microbial infection) Interacts with EAV NSP1. Binds to acidic transactivation domain of EBNA2. Interacts with SARS-CoV-2 NSP9. Post-translationally, phosphorylated by PIM1 in vitro. In terms of tissue distribution, ubiquitously expressed.

It is found in the cytoplasm. The protein resides in the nucleus. It localises to the melanosome. It carries out the reaction Endonucleolytic cleavage to nucleoside 3'-phosphates and 3'-phosphooligonucleotide end-products.. Endonuclease that mediates miRNA decay of both protein-free and AGO2-loaded miRNAs. As part of its function in miRNA decay, regulates mRNAs involved in G1-to-S phase transition. Functions as a bridging factor between STAT6 and the basal transcription factor. Plays a role in PIM1 regulation of MYB activity. Functions as a transcriptional coactivator for STAT5. Functionally, (Microbial infection) Functions as a transcriptional coactivator for the Epstein-Barr virus nuclear antigen 2 (EBNA2). Its function is as follows. (Microbial infection) Promotes SARS-CoV-2 RNA synthesis by binding to negative-sense RNA and the viral protein nsp9. This is Staphylococcal nuclease domain-containing protein 1 (SND1) from Homo sapiens (Human).